The primary structure comprises 137 residues: Small ribosomal subunit protein uS11 (137 aa).

A disordered region spans residues 116 to 137 (EDVTPIPHDGTRRPGGKRGRRV).

It belongs to the universal ribosomal protein uS11 family. As to quaternary structure, part of the 30S ribosomal subunit.

In terms of biological role, located on the platform of the 30S subunit. This chain is Small ribosomal subunit protein uS11, found in Methanopyrus kandleri (strain AV19 / DSM 6324 / JCM 9639 / NBRC 100938).